Consider the following 315-residue polypeptide: WD repeat domain-containing protein 83 (315 aa).

7 WD repeats span residues 23–62, 65–104, 107–146, 151–188, 190–228, 231–272, and 275–313; these read CGQG…LLRT, GHGY…VVRK, GHAG…PEPV, EARD…VTSD, VGSP…LLGE, GHKN…LALA, and VGSN…AEGG.

The protein belongs to the WD repeat MORG1 family. As to quaternary structure, interacts with EGLN3/PHD3. Interacts with ERK signaling proteins MAP2K1/MEK1, MAP2K2/MEK2, LAMTOR3, ARAF/Raf-1, MAPK1/ERK2 and MAPK3/ERK1. Identified in the spliceosome C complex. Interacts with PARD6B and CRB3. Interacts strongly with GTP-bound RRAGA but not with inactive GDP-bound. Interacts with p62/SQSTM1. Highly expressed in testis and brain. Expressed at intermediate level in heart, liver and kidney. Weakly expressed in spleen and lung and absent in muscle.

Its subcellular location is the cytoplasm. The protein resides in the lysosome. It is found in the nucleus. Functionally, molecular scaffold protein for various multimeric protein complexes. Acts as a module in the assembly of a multicomponent scaffold for the ERK pathway, linking ERK responses to specific agonists. At low concentrations it enhances ERK activation, whereas high concentrations lead to the inhibition of ERK activation. Also involved in response to hypoxia by acting as a negative regulator of HIF1A/HIF-1-alpha via its interaction with EGLN3/PHD3. May promote degradation of HIF1A. May act by recruiting signaling complexes to a specific upstream activator. May also be involved in pre-mRNA splicing. Participates in tight junction development by regulating apico-basal polarity, a key step in tissue development and organization. Mechanistically, regulates the translocation of PAR6-aPKC from the cytoplasm to the apical surface by acting as an adapter between PARD6B AND CRB3. Also acts as a negative regulator of mTORC1 under nutrient-rich conditions by binding to the active Rag GTPases to inhibit mTORC1 localization to the lysosome and phosphorylation of downstream targets. This facilitates constitutive basal autophagy during nutrient availability. This is WD repeat domain-containing protein 83 (Wdr83) from Rattus norvegicus (Rat).